We begin with the raw amino-acid sequence, 385 residues long: Prepilin peptidase EppA (385 aa).

Transmembrane regions (helical) follow at residues 1–21 (MILM…CFYA), 29–49 (GIIP…LNGA), 58–78 (WIFI…YILW), 80–100 (MVAW…LLPF), 104–124 (LVSY…PFPL), 126–146 (VIIN…FFII), 166–186 (TSMV…LITD), 187–207 (FLPF…TMVI), 231–251 (FELT…IQLI), and 358–378 (PAIF…MILF).

Belongs to the peptidase A24 family.

Its subcellular location is the cell membrane. Peptidase that processes the N-terminus of prepilins. The polypeptide is Prepilin peptidase EppA (Methanothermobacter thermautotrophicus (strain ATCC 29096 / DSM 1053 / JCM 10044 / NBRC 100330 / Delta H) (Methanobacterium thermoautotrophicum)).